A 160-amino-acid chain; its full sequence is Ribonuclease H (160 aa).

The RNase H type-1 domain maps to 1 to 157 (MNIEIYTDGA…CDRLAVEACQ (157 aa)). Positions 8, 49, 85, and 149 each coordinate Mg(2+).

Belongs to the RNase H family. Monomer. The cofactor is Mg(2+).

It is found in the cytoplasm. The enzyme catalyses Endonucleolytic cleavage to 5'-phosphomonoester.. Endonuclease that specifically degrades the RNA of RNA-DNA hybrids. The chain is Ribonuclease H from Treponema denticola (strain ATCC 35405 / DSM 14222 / CIP 103919 / JCM 8153 / KCTC 15104).